The primary structure comprises 201 residues: Small ribosomal subunit protein uS4 (201 aa).

Residues 91-157 enclose the S4 RNA-binding domain; it reads SRLDNVVYRA…LPFQVARETV (67 aa).

This sequence belongs to the universal ribosomal protein uS4 family. Part of the 30S ribosomal subunit. Contacts protein S5. The interaction surface between S4 and S5 is involved in control of translational fidelity.

In terms of biological role, one of the primary rRNA binding proteins, it binds directly to 16S rRNA where it nucleates assembly of the body of the 30S subunit. Functionally, with S5 and S12 plays an important role in translational accuracy. The chain is Small ribosomal subunit protein uS4 from Rhodococcus erythropolis (strain PR4 / NBRC 100887).